The following is a 369-amino-acid chain: DNA replication and repair protein RecF (369 aa).

Residue glycine 30–threonine 37 participates in ATP binding.

Belongs to the RecF family.

It localises to the cytoplasm. Its function is as follows. The RecF protein is involved in DNA metabolism; it is required for DNA replication and normal SOS inducibility. RecF binds preferentially to single-stranded, linear DNA. It also seems to bind ATP. This chain is DNA replication and repair protein RecF, found in Macrococcus caseolyticus (strain JCSC5402) (Macrococcoides caseolyticum).